The sequence spans 190 residues: dCTP deaminase, dUMP-forming (190 aa).

Residues 101–106 (KSSLGR), D119, 127–129 (TLE), Q148, Y162, K170, and Q174 each bind dCTP. E129 functions as the Proton donor/acceptor in the catalytic mechanism. Positions 160–190 (HPYGSSRAGSKYQGQRGPTPSRSYQNFIRST) are disordered. The segment covering 171 to 190 (YQGQRGPTPSRSYQNFIRST) has biased composition (polar residues).

Belongs to the dCTP deaminase family. Homotrimer.

It catalyses the reaction dCTP + 2 H2O = dUMP + NH4(+) + diphosphate. It functions in the pathway pyrimidine metabolism; dUMP biosynthesis; dUMP from dCTP: step 1/1. Functionally, bifunctional enzyme that catalyzes both the deamination of dCTP to dUTP and the hydrolysis of dUTP to dUMP without releasing the toxic dUTP intermediate. This chain is dCTP deaminase, dUMP-forming, found in Mycobacterium tuberculosis (strain ATCC 25177 / H37Ra).